The sequence spans 689 residues: Glycine--tRNA ligase beta subunit (689 aa).

It belongs to the class-II aminoacyl-tRNA synthetase family. In terms of assembly, tetramer of two alpha and two beta subunits.

It localises to the cytoplasm. It carries out the reaction tRNA(Gly) + glycine + ATP = glycyl-tRNA(Gly) + AMP + diphosphate. In Shewanella halifaxensis (strain HAW-EB4), this protein is Glycine--tRNA ligase beta subunit.